The sequence spans 129 residues: Glycine cleavage system H protein (129 aa).

The 83-residue stretch at 24 to 106 folds into the Lipoyl-binding domain; it reads LLKIGVSEFA…IGEGWLVILK (83 aa). Position 65 is an N6-lipoyllysine (Lys-65).

It belongs to the GcvH family. In terms of assembly, the glycine cleavage system is composed of four proteins: P, T, L and H. Requires (R)-lipoate as cofactor.

The glycine cleavage system catalyzes the degradation of glycine. The H protein shuttles the methylamine group of glycine from the P protein to the T protein. The polypeptide is Glycine cleavage system H protein (Prochlorococcus marinus (strain AS9601)).